The primary structure comprises 156 residues: uncharacterized protein (156 aa).

This is an uncharacterized protein from Saccharolobus islandicus (Sulfolobus islandicus).